A 464-amino-acid polypeptide reads, in one-letter code: uncharacterized protein (464 aa).

Disordered regions lie at residues 290-374 and 445-464; these read YRKQ…ERPK and ETDDEDEENQYSEAEKPLEE. Residues 293-302 show a composition bias toward low complexity; that stretch reads QQQWQQQQQQ. The segment covering 303 to 318 has biased composition (basic residues); it reads RKVKTPIKKQEAKKKA. Polar residues predominate over residues 352-367; the sequence is DMKQQQQMEKGTTSKQ. Residues 445-454 show a composition bias toward acidic residues; sequence ETDDEDEENQ.

This is an uncharacterized protein from Macaca fascicularis (Crab-eating macaque).